Reading from the N-terminus, the 182-residue chain is Heat shock protein beta-2 (182 aa).

The 109-residue stretch at 55 to 163 folds into the sHSP domain; it reads RAGEGARAGA…DTEVNEVYIS (109 aa).

The protein belongs to the small heat shock protein (HSP20) family. As to quaternary structure, interacts with DMPK; may enhance its kinase activity.

It localises to the cytoplasm. The protein resides in the nucleus. Functionally, may regulate the kinase DMPK. This chain is Heat shock protein beta-2 (Hspb2), found in Mus musculus (Mouse).